A 118-amino-acid chain; its full sequence is Large ribosomal subunit protein bL20 (118 aa).

Belongs to the bacterial ribosomal protein bL20 family.

Its function is as follows. Binds directly to 23S ribosomal RNA and is necessary for the in vitro assembly process of the 50S ribosomal subunit. It is not involved in the protein synthesizing functions of that subunit. In Parvibaculum lavamentivorans (strain DS-1 / DSM 13023 / NCIMB 13966), this protein is Large ribosomal subunit protein bL20.